We begin with the raw amino-acid sequence, 235 residues long: Sugar fermentation stimulation protein homolog (235 aa).

Belongs to the SfsA family.

This Aliivibrio fischeri (strain MJ11) (Vibrio fischeri) protein is Sugar fermentation stimulation protein homolog.